The primary structure comprises 1144 residues: Adenylate cyclase type 3 (1144 aa).

Residues 1–79 are Cytoplasmic-facing; sequence MTEDQGFSDP…FKRQRHETLL (79 aa). 5 helical membrane-spanning segments follow: residues 80 to 100, 105 to 125, 139 to 159, 173 to 193, and 226 to 246; these read VLVV…AVVF, LAPL…FVLC, VPYL…GLNF, AFFV…IVII, and ILAN…SYYM. Asp324, Ile325, and Asp368 together coordinate Mg(2+). Residues 324 to 329 and 366 to 368 each bind ATP; these read DIVGFT and LGD. Residues 381-401 form a helical membrane-spanning segment; it reads EDHAVCSILMGLAMVEAISYV. The Cytoplasmic portion of the chain corresponds to 402 to 630; that stretch reads REKTKTGVDM…RYSVEKEKQS (229 aa). Arg412 provides a ligand contact to ATP. Lys465 participates in a covalent cross-link: Glycyl lysine isopeptide (Lys-Gly) (interchain with G-Cter in SUMO3). Residues 504–563 are disordered; that stretch reads QNGLNGSALPNGAPASKPSSPALIETKEPNGSAHASGSTSEEAEEQEAQADNPSFPNPRR. Ser523 carries the phosphoserine modification. Over residues 534–543 the composition is skewed to low complexity; it reads GSAHASGSTS. A Phosphoserine modification is found at Ser578. The next 3 membrane-spanning stretches (helical) occupy residues 631–651, 662–682, and 706–726; these read GAAF…EILI, FVVG…AIFP, and WAML…LSCL. N-linked (GlcNAc...) asparagine glycosylation occurs at Asn734. A run of 3 helical transmembrane segments spans residues 755 to 775, 777 to 797, and 833 to 853; these read VAVL…MVKL, LMLL…CPVF, and LPLV…MLSF. The Cytoplasmic portion of the chain corresponds to 854 to 1144; sequence YYFSRHVEKL…TLPHQVVDNP (291 aa). ATP is bound by residues Lys975, 1062-1064, and 1069-1073; these read DIW and NVASR. The residue at position 1076 (Ser1076) is a Phosphoserine; by CaMK2. Residue Lys1109 coordinates ATP.

It belongs to the adenylyl cyclase class-4/guanylyl cyclase family. Requires Mg(2+) as cofactor. It depends on Mn(2+) as a cofactor. Post-translationally, N-glycosylated. Sumoylated. Sumoylation is required for targeting ot olfactory cilia. In terms of processing, rapidly phosphorylated after stimulation by odorants or forskolin. Phosphorylation by CaMK2 at Ser-1076 down-regulates enzyme activity. As to expression, detected on cilia on the olfactory epithelium (at protein level). Detected on cilia on the olfactory epithelium.

It is found in the cell membrane. It localises to the golgi apparatus. Its subcellular location is the cell projection. The protein localises to the cilium. The protein resides in the cytoplasm. The enzyme catalyses ATP = 3',5'-cyclic AMP + diphosphate. Its activity is regulated as follows. Specifically activated by the G alpha protein GNAL/G(olf) in signaling cascades triggered by odorant receptors. Activated by forskolin. After forskolin treatment, activity is further increased by calcium/calmodulin. In the absence of forskolin, calcium/calmodulin has little effect on enzyme activity. Its function is as follows. Catalyzes the formation of the signaling molecule cAMP in response to G-protein signaling. Participates in signaling cascades triggered by odorant receptors via its function in cAMP biosynthesis: specifically activated by G alpha protein GNAL/G(olf) in olfactory epithelium. Required for the perception of odorants. Required for normal sperm motility and normal male fertility. Plays a role in regulating insulin levels and body fat accumulation in response to a high fat diet. This Rattus norvegicus (Rat) protein is Adenylate cyclase type 3.